The chain runs to 532 residues: 56 kDa type-specific antigen (532 aa).

The signal sequence occupies residues methionine 1–alanine 22. The chain crosses the membrane as a helical span at residues leucine 67–phenylalanine 87. Disordered stretches follow at residues lysine 113–threonine 140 and glutamine 400–glycine 426. Over residues glutamate 403–cysteine 413 the composition is skewed to basic and acidic residues. A helical transmembrane segment spans residues threonine 480–valine 500.

It is found in the cell membrane. Functionally, may be an adherent factor for rickettsial adsorption to the host-cell surface and a determinant of virulence of individual rickettsial strain. It is the major outer membrane protein. In Orientia tsutsugamushi (Rickettsia tsutsugamushi), this protein is 56 kDa type-specific antigen.